The sequence spans 339 residues: 2-deoxy-scyllo-inosamine dehydrogenase (339 aa).

7 residues coordinate Zn(2+): C37, H59, C88, C91, C94, C102, and E143.

The protein belongs to the zinc-containing alcohol dehydrogenase family. DOIA dehydrogenase subfamily. Zn(2+) is required as a cofactor.

The enzyme catalyses 2-deoxy-scyllo-inosamine + NADP(+) = 3-amino-2,3-dideoxy-scyllo-inosose + NADPH + H(+). It catalyses the reaction 2-deoxy-scyllo-inosamine + NAD(+) = 3-amino-2,3-dideoxy-scyllo-inosose + NADH + H(+). It participates in metabolic intermediate biosynthesis; 2-deoxystreptamine biosynthesis; 2-deoxystreptamine from D-glucose 6-phosphate: step 3/4. Its pathway is antibiotic biosynthesis; paromomycin biosynthesis. Catalyzes the oxidation of 2-deoxy-scyllo-inosamine (DOIA) with NAD(+) or NADP(+), forming 3-amino-2,3-dideoxy-scyllo-inosose (amino-DOI). In Streptomyces paromomycinus (Streptomyces rimosus subsp. paromomycinus), this protein is 2-deoxy-scyllo-inosamine dehydrogenase (parE).